Consider the following 229-residue polypeptide: Ribonuclease 3 (229 aa).

The RNase III domain maps to 7–132 (ISAFCDRIGH…VIAAVYRDAG (126 aa)). Residue Glu45 participates in Mg(2+) binding. Asp49 is an active-site residue. Residues Asp118 and Glu121 each contribute to the Mg(2+) site. The active site involves Glu121. The region spanning 157–226 (DPKTALQEWA…AKALLAQVES (70 aa)) is the DRBM domain.

This sequence belongs to the ribonuclease III family. As to quaternary structure, homodimer. Mg(2+) serves as cofactor.

It localises to the cytoplasm. The enzyme catalyses Endonucleolytic cleavage to 5'-phosphomonoester.. Functionally, digests double-stranded RNA. Involved in the processing of primary rRNA transcript to yield the immediate precursors to the large and small rRNAs (23S and 16S). Processes some mRNAs, and tRNAs when they are encoded in the rRNA operon. Processes pre-crRNA and tracrRNA of type II CRISPR loci if present in the organism. The protein is Ribonuclease 3 of Dinoroseobacter shibae (strain DSM 16493 / NCIMB 14021 / DFL 12).